The following is a 160-amino-acid chain: Probable NADH dehydrogenase [ubiquinone] 1 beta subcomplex subunit 2, mitochondrial (160 aa).

Belongs to the complex I NDUFB2 subunit family. In terms of assembly, complex I is composed of 45 different subunits.

The protein resides in the mitochondrion inner membrane. Functionally, accessory subunit of the mitochondrial membrane respiratory chain NADH dehydrogenase (Complex I), that is believed not to be involved in catalysis. Complex I functions in the transfer of electrons from NADH to the respiratory chain. The immediate electron acceptor for the enzyme is believed to be ubiquinone. The chain is Probable NADH dehydrogenase [ubiquinone] 1 beta subcomplex subunit 2, mitochondrial from Caenorhabditis elegans.